The chain runs to 443 residues: D-serine dehydratase (443 aa).

Lys-118 carries the N6-(pyridoxal phosphate)lysine modification.

This sequence belongs to the serine/threonine dehydratase family. DsdA subfamily. Monomer. The cofactor is pyridoxal 5'-phosphate.

It catalyses the reaction D-serine = pyruvate + NH4(+). This chain is D-serine dehydratase, found in Yersinia enterocolitica serotype O:8 / biotype 1B (strain NCTC 13174 / 8081).